The chain runs to 192 residues: Probable apo-citrate lyase phosphoribosyl-dephospho-CoA transferase (192 aa).

Belongs to the CitX family.

It carries out the reaction apo-[citrate lyase ACP] + 2'-(5''-triphospho-alpha-D-ribosyl)-3'-dephospho-CoA = holo-[citrate lyase ACP] + diphosphate. In terms of biological role, transfers 2-(5''-triphosphoribosyl)-3'-dephosphocoenzyme-A on a serine residue to the apo-acyl carrier protein (gamma chain) of the citrate lyase to yield holo-acyl carrier protein. The polypeptide is Probable apo-citrate lyase phosphoribosyl-dephospho-CoA transferase (Streptococcus pyogenes serotype M3 (strain ATCC BAA-595 / MGAS315)).